The following is a 156-amino-acid chain: MKCRLIATGERAPSWVAQGFAEYQKRLSHWMPLELVEIEPGLRGKGRDAQRATDDEGRRVLAALPKNAYVVALDVPGRPLSSEQLAQRMEHWRGQGRDLALLIGGPEGHSAEVLKSASESWSIGPLTLPHMLVRLIVAEQLYRAAAMLANHPYHRA.

S-adenosyl-L-methionine contacts are provided by residues Leu73, Gly104, and Ile123–Leu128.

The protein belongs to the RNA methyltransferase RlmH family. In terms of assembly, homodimer.

It is found in the cytoplasm. The catalysed reaction is pseudouridine(1915) in 23S rRNA + S-adenosyl-L-methionine = N(3)-methylpseudouridine(1915) in 23S rRNA + S-adenosyl-L-homocysteine + H(+). In terms of biological role, specifically methylates the pseudouridine at position 1915 (m3Psi1915) in 23S rRNA. The chain is Ribosomal RNA large subunit methyltransferase H from Xanthomonas oryzae pv. oryzae (strain MAFF 311018).